A 504-amino-acid chain; its full sequence is Glycerol kinase (504 aa).

T12 is an ADP binding site. ATP is bound by residues T12, T13, and S14. T12 is a binding site for sn-glycerol 3-phosphate. R16 is an ADP binding site. Sn-glycerol 3-phosphate is bound by residues R82, E83, Y134, and D246. 5 residues coordinate glycerol: R82, E83, Y134, D246, and Q247. The ADP site is built by T268 and G312. Residues T268, G312, Q316, and G413 each coordinate ATP. ADP contacts are provided by G413 and N417.

The protein belongs to the FGGY kinase family.

It carries out the reaction glycerol + ATP = sn-glycerol 3-phosphate + ADP + H(+). The protein operates within polyol metabolism; glycerol degradation via glycerol kinase pathway; sn-glycerol 3-phosphate from glycerol: step 1/1. Its activity is regulated as follows. Inhibited by fructose 1,6-bisphosphate (FBP). Key enzyme in the regulation of glycerol uptake and metabolism. Catalyzes the phosphorylation of glycerol to yield sn-glycerol 3-phosphate. This chain is Glycerol kinase, found in Paenarthrobacter aurescens (strain TC1).